The sequence spans 565 residues: Urocanate hydratase (565 aa).

Residues 61–62 (GG), glutamine 139, 185–187 (GMG), glutamate 205, arginine 210, 251–252 (NA), 272–276 (QTSAH), 282–283 (YL), and tyrosine 331 contribute to the NAD(+) site. Cysteine 419 is a catalytic residue. The tract at residues 453-472 (LDSGSVASPNRETESMRDGS) is disordered. The span at 463-472 (RETESMRDGS) shows a compositional bias: basic and acidic residues. Glycine 501 contacts NAD(+).

It belongs to the urocanase family. NAD(+) serves as cofactor.

The protein localises to the cytoplasm. It carries out the reaction 4-imidazolone-5-propanoate = trans-urocanate + H2O. It functions in the pathway amino-acid degradation; L-histidine degradation into L-glutamate; N-formimidoyl-L-glutamate from L-histidine: step 2/3. Functionally, catalyzes the conversion of urocanate to 4-imidazolone-5-propionate. This is Urocanate hydratase from Pseudomonas savastanoi pv. phaseolicola (strain 1448A / Race 6) (Pseudomonas syringae pv. phaseolicola (strain 1448A / Race 6)).